The sequence spans 472 residues: ATP synthase subunit beta (472 aa).

157-164 (GGAGVGKT) serves as a coordination point for ATP.

It belongs to the ATPase alpha/beta chains family. F-type ATPases have 2 components, CF(1) - the catalytic core - and CF(0) - the membrane proton channel. CF(1) has five subunits: alpha(3), beta(3), gamma(1), delta(1), epsilon(1). CF(0) has three main subunits: a(1), b(2) and c(9-12). The alpha and beta chains form an alternating ring which encloses part of the gamma chain. CF(1) is attached to CF(0) by a central stalk formed by the gamma and epsilon chains, while a peripheral stalk is formed by the delta and b chains.

It is found in the cell inner membrane. The enzyme catalyses ATP + H2O + 4 H(+)(in) = ADP + phosphate + 5 H(+)(out). Functionally, produces ATP from ADP in the presence of a proton gradient across the membrane. The catalytic sites are hosted primarily by the beta subunits. This is ATP synthase subunit beta from Desulfatibacillum aliphaticivorans.